Consider the following 922-residue polypeptide: Isoleucine--tRNA ligase (922 aa).

Positions 57–67 (PYANGDIHMGH) match the 'HIGH' region motif. Glu-553 serves as a coordination point for L-isoleucyl-5'-AMP. The 'KMSKS' region signature appears at 594-598 (KMSKS). Lys-597 lines the ATP pocket. Residues Cys-889, Cys-892, Cys-909, and Cys-912 each coordinate Zn(2+).

This sequence belongs to the class-I aminoacyl-tRNA synthetase family. IleS type 1 subfamily. Monomer. Zn(2+) is required as a cofactor.

The protein localises to the cytoplasm. It carries out the reaction tRNA(Ile) + L-isoleucine + ATP = L-isoleucyl-tRNA(Ile) + AMP + diphosphate. Its function is as follows. Catalyzes the attachment of isoleucine to tRNA(Ile). As IleRS can inadvertently accommodate and process structurally similar amino acids such as valine, to avoid such errors it has two additional distinct tRNA(Ile)-dependent editing activities. One activity is designated as 'pretransfer' editing and involves the hydrolysis of activated Val-AMP. The other activity is designated 'posttransfer' editing and involves deacylation of mischarged Val-tRNA(Ile). This is Isoleucine--tRNA ligase from Bacillus licheniformis (strain ATCC 14580 / DSM 13 / JCM 2505 / CCUG 7422 / NBRC 12200 / NCIMB 9375 / NCTC 10341 / NRRL NRS-1264 / Gibson 46).